The following is a 419-amino-acid chain: 3-isopropylmalate dehydratase large subunit (419 aa).

[4Fe-4S] cluster-binding residues include Cys300, Cys360, and Cys363.

It belongs to the aconitase/IPM isomerase family. LeuC type 2 subfamily. In terms of assembly, heterodimer of LeuC and LeuD. It depends on [4Fe-4S] cluster as a cofactor.

It carries out the reaction (2R,3S)-3-isopropylmalate = (2S)-2-isopropylmalate. Its pathway is amino-acid biosynthesis; L-leucine biosynthesis; L-leucine from 3-methyl-2-oxobutanoate: step 2/4. In terms of biological role, catalyzes the isomerization between 2-isopropylmalate and 3-isopropylmalate, via the formation of 2-isopropylmaleate. This chain is 3-isopropylmalate dehydratase large subunit, found in Acetivibrio thermocellus (strain ATCC 27405 / DSM 1237 / JCM 9322 / NBRC 103400 / NCIMB 10682 / NRRL B-4536 / VPI 7372) (Clostridium thermocellum).